The following is an 80-amino-acid chain: MKKDIHPNYQETTISCACGAVYTTKSTKPSIRIGICASCHPLFTGQQKFVDTAGRVEKFARRFGKISFIGESSNKKKKTK.

Zn(2+) is bound by residues cysteine 16, cysteine 18, cysteine 36, and cysteine 39.

It belongs to the bacterial ribosomal protein bL31 family. Type A subfamily. In terms of assembly, part of the 50S ribosomal subunit. Requires Zn(2+) as cofactor.

Functionally, binds the 23S rRNA. This is Large ribosomal subunit protein bL31 from Methylacidiphilum infernorum (isolate V4) (Methylokorus infernorum (strain V4)).